Reading from the N-terminus, the 246-residue chain is Ribonuclease 3 (246 aa).

Positions 16 to 144 (LLEFQKQAGL…VIGAYYIDSG (129 aa)) constitute an RNase III domain. Mg(2+) is bound at residue Glu-57. Residue Asp-61 is part of the active site. The Mg(2+) site is built by Asp-130 and Glu-133. Glu-133 is an active-site residue. The 70-residue stretch at 171–240 (DYKSLLQELV…AKVAYENLCS (70 aa)) folds into the DRBM domain.

This sequence belongs to the ribonuclease III family. As to quaternary structure, homodimer. It depends on Mg(2+) as a cofactor.

It localises to the cytoplasm. The catalysed reaction is Endonucleolytic cleavage to 5'-phosphomonoester.. Functionally, digests double-stranded RNA. Involved in the processing of primary rRNA transcript to yield the immediate precursors to the large and small rRNAs (23S and 16S). Processes some mRNAs, and tRNAs when they are encoded in the rRNA operon. Processes pre-crRNA and tracrRNA of type II CRISPR loci if present in the organism. In Treponema denticola (strain ATCC 35405 / DSM 14222 / CIP 103919 / JCM 8153 / KCTC 15104), this protein is Ribonuclease 3.